The following is a 90-amino-acid chain: Probable Fe(2+)-trafficking protein (90 aa).

This sequence belongs to the Fe(2+)-trafficking protein family.

Could be a mediator in iron transactions between iron acquisition and iron-requiring processes, such as synthesis and/or repair of Fe-S clusters in biosynthetic enzymes. This is Probable Fe(2+)-trafficking protein from Pseudomonas putida (strain W619).